The primary structure comprises 82 residues: Small ribosomal subunit protein uS17 (82 aa).

It belongs to the universal ribosomal protein uS17 family. Part of the 30S ribosomal subunit.

Functionally, one of the primary rRNA binding proteins, it binds specifically to the 5'-end of 16S ribosomal RNA. In Aeromonas salmonicida (strain A449), this protein is Small ribosomal subunit protein uS17.